Reading from the N-terminus, the 785-residue chain is AP-1 complex subunit gamma-like 2 (785 aa).

The essential for ubiquitin-binding stretch occupies residues 369-379 (LSLALVNSSNV). The tract at residues 592–617 (GPQADEEAKESKEAAQLSEAAPVPTE) is disordered. The 116-residue stretch at 665–780 (APIPDLKVFE…QEIFEVNNLP (116 aa)) folds into the GAE domain.

It belongs to the adaptor complexes large subunit family. In terms of assembly, may interact with AP1S1/Sigma1A-adaptin and AP1S2/Sigma1B-adaptin. Probably does not interact with APB1. Interacts (via GAE domain) with RABEP1, NECAP1, CLINT1 and AFTPH/aftiphilin. As to quaternary structure, (Microbial infection) Interacts with HBV major surface antigen L. Interacts with HBV core protein C in a ubiquitin-dependent manner. As to expression, expressed in all but one (skeletal muscle) tissues examined.

It is found in the golgi apparatus membrane. It localises to the cytoplasmic vesicle membrane. Its subcellular location is the endosome membrane. Functionally, may function in protein sorting in late endosomes or multivesucular bodies (MVBs). In terms of biological role, (Microbial infection) Involved in MVB-assisted maturation of hepatitis B virus (HBV). The sequence is that of AP-1 complex subunit gamma-like 2 (AP1G2) from Homo sapiens (Human).